Consider the following 207-residue polypeptide: Dephospho-CoA kinase (207 aa).

The 198-residue stretch at 10–207 (ILGLTGGIGS…FYLTLRGGQS (198 aa)) folds into the DPCK domain. 18–23 (GSGKSA) lines the ATP pocket.

Belongs to the CoaE family.

The protein resides in the cytoplasm. The catalysed reaction is 3'-dephospho-CoA + ATP = ADP + CoA + H(+). Its pathway is cofactor biosynthesis; coenzyme A biosynthesis; CoA from (R)-pantothenate: step 5/5. Catalyzes the phosphorylation of the 3'-hydroxyl group of dephosphocoenzyme A to form coenzyme A. This chain is Dephospho-CoA kinase, found in Pseudomonas syringae pv. syringae (strain B728a).